Here is a 527-residue protein sequence, read N- to C-terminus: Matrix metalloproteinase-19 (527 aa).

The signal sequence occupies residues 1-18 (MDWQQLWLAFLLPMTVSG). A propeptide spanning residues 19–98 (RALGPTEKEA…EDPFNQKSLK (80 aa)) is cleaved from the precursor. A Cysteine switch motif is present at residues 84-91 (PRCGLEDP). C86 lines the Zn(2+) pocket. N-linked (GlcNAc...) asparagine glycosylation occurs at N109. H213 contacts Zn(2+). Residue E214 is part of the active site. Zn(2+)-binding residues include H217 and H223. 4 Hemopexin repeats span residues 286–333 (PNPC…WEGL), 334–372 (PGNL…FPMK), 377–425 (EPNL…FTGV), and 426–471 (PDRP…WMHC). The cysteines at positions 289 and 471 are disulfide-linked. N-linked (GlcNAc...) asparagine glycosylation is found at N464 and N479. Residues 473–500 (SQTPDTNSSTGDVTPSTTDTVLGTTPST) form a disordered region. D512 carries GPI-anchor amidated aspartate lipidation. The propeptide at 513–527 (SASLSFSANVTLLGA) is removed in mature form. N-linked (GlcNAc...) asparagine glycosylation is present at N521.

Belongs to the peptidase M10A family. Requires Zn(2+) as cofactor. It depends on Ca(2+) as a cofactor. In terms of processing, activated by autolytic cleavage after Lys-98. Tyrosine phosphorylated by PKDCC/VLK. In terms of tissue distribution, highly expressed in the liver. Expressed in the arterial tunica media of large blood vessels.

The protein resides in the cell membrane. Its subcellular location is the secreted. It is found in the extracellular space. It localises to the extracellular matrix. Functionally, endopeptidase that degrades various components of the extracellular matrix, such as aggrecan and cartilage oligomeric matrix protein (comp), during development, haemostasis and pathological conditions (arthritic disease). May also play a role in neovascularization or angiogenesis. Hydrolyzes collagen type IV, laminin, nidogen, nascin-C isoform, fibronectin, and type I gelatin. This is Matrix metalloproteinase-19 (Mmp19) from Mus musculus (Mouse).